The following is a 683-amino-acid chain: Multidrug resistance protein MdtO (683 aa).

Helical transmembrane passes span 43 to 63 (VILI…AVLF), 75 to 95 (FVAI…FLIY), 100 to 120 (GEPL…MFLM), 125 to 145 (LGLV…FPAM), 158 to 178 (WCIV…VLWF), 402 to 422 (FGGA…VMPW), 426 to 446 (IVEL…IATS), 457 to 477 (MVVT…YDLV), and 483 to 503 (ALGI…VWPE).

Belongs to the MdtO family. Could be part of a tripartite efflux system composed of MdtN, MdtO and MdtP.

The protein localises to the cell inner membrane. Could be involved in resistance to puromycin, acriflavine and tetraphenylarsonium chloride. This chain is Multidrug resistance protein MdtO (mdtO), found in Escherichia coli O157:H7.